The following is a 261-amino-acid chain: uncharacterized protein (261 aa).

An N-terminal signal peptide occupies residues 1–20; that stretch reads MKIQVMLIIIFVGIFTICLA. Asn22 and Asn27 each carry an N-linked (GlcNAc...) asparagine; by host glycan.

The protein localises to the secreted. This is an uncharacterized protein from Acanthamoeba polyphaga (Amoeba).